A 229-amino-acid polypeptide reads, in one-letter code: Large ribosomal subunit protein uL1 (229 aa).

It belongs to the universal ribosomal protein uL1 family. As to quaternary structure, part of the 50S ribosomal subunit.

Its function is as follows. Binds directly to 23S rRNA. The L1 stalk is quite mobile in the ribosome, and is involved in E site tRNA release. Functionally, protein L1 is also a translational repressor protein, it controls the translation of the L11 operon by binding to its mRNA. This Clostridium kluyveri (strain ATCC 8527 / DSM 555 / NBRC 12016 / NCIMB 10680 / K1) protein is Large ribosomal subunit protein uL1.